We begin with the raw amino-acid sequence, 679 residues long: Methionine--tRNA ligase (679 aa).

Residues 15–25 (PYANGPVHIGH) carry the 'HIGH' region motif. Positions 147, 150, 160, and 163 each coordinate Zn(2+). The short motif at 332 to 336 (KISTS) is the 'KMSKS' region element. Thr-335 is a binding site for ATP. The region spanning 578-679 (DFMKLDIRVG…REVKPGSEVK (102 aa)) is the tRNA-binding domain.

It belongs to the class-I aminoacyl-tRNA synthetase family. MetG type 1 subfamily. Homodimer. Requires Zn(2+) as cofactor.

Its subcellular location is the cytoplasm. It catalyses the reaction tRNA(Met) + L-methionine + ATP = L-methionyl-tRNA(Met) + AMP + diphosphate. Its function is as follows. Is required not only for elongation of protein synthesis but also for the initiation of all mRNA translation through initiator tRNA(fMet) aminoacylation. The polypeptide is Methionine--tRNA ligase (Bacteroides fragilis (strain ATCC 25285 / DSM 2151 / CCUG 4856 / JCM 11019 / LMG 10263 / NCTC 9343 / Onslow / VPI 2553 / EN-2)).